We begin with the raw amino-acid sequence, 341 residues long: Large ribosomal subunit protein uL10 (341 aa).

The interval 301 to 341 (EAAPAAAPAAEEKAEEEKKEEEEEKKEDQELSGLDSIFGGF) is disordered.

This sequence belongs to the universal ribosomal protein uL10 family. As to quaternary structure, part of the 50S ribosomal subunit. Forms part of the ribosomal stalk which helps the ribosome interact with GTP-bound translation factors. Forms a heptameric L10(L12)2(L12)2(L12)2 complex, where L10 forms an elongated spine to which the L12 dimers bind in a sequential fashion.

Functionally, forms part of the ribosomal stalk, playing a central role in the interaction of the ribosome with GTP-bound translation factors. This chain is Large ribosomal subunit protein uL10, found in Aeropyrum pernix (strain ATCC 700893 / DSM 11879 / JCM 9820 / NBRC 100138 / K1).